Reading from the N-terminus, the 93-residue chain is UPF0358 protein BBR47_22520 (93 aa).

This sequence belongs to the UPF0358 family.

This is UPF0358 protein BBR47_22520 from Brevibacillus brevis (strain 47 / JCM 6285 / NBRC 100599).